Consider the following 182-residue polypeptide: Dual-action ribosomal maturation protein DarP (182 aa).

Positions 1–25 (MEENLADNSEREARPSKTKRKKEMH) are disordered.

The protein belongs to the DarP family.

Its subcellular location is the cytoplasm. Its function is as follows. Member of a network of 50S ribosomal subunit biogenesis factors which assembles along the 30S-50S interface, preventing incorrect 23S rRNA structures from forming. Promotes peptidyl transferase center (PTC) maturation. This Nitrosospira multiformis (strain ATCC 25196 / NCIMB 11849 / C 71) protein is Dual-action ribosomal maturation protein DarP.